The sequence spans 511 residues: Ribose import ATP-binding protein RbsA (511 aa).

ABC transporter domains follow at residues Phe9–Asp245 and Leu261–Arg506. Gly41–Ser48 is an ATP binding site.

This sequence belongs to the ABC transporter superfamily. Ribose importer (TC 3.A.1.2.1) family. In terms of assembly, the complex is composed of an ATP-binding protein (RbsA), two transmembrane proteins (RbsC) and a solute-binding protein (RbsB).

The protein resides in the cell inner membrane. The catalysed reaction is D-ribose(out) + ATP + H2O = D-ribose(in) + ADP + phosphate + H(+). Part of the ABC transporter complex RbsABC involved in ribose import. Responsible for energy coupling to the transport system. The chain is Ribose import ATP-binding protein RbsA from Rhodopirellula baltica (strain DSM 10527 / NCIMB 13988 / SH1).